The chain runs to 117 residues: Ubiquitin-like protein 3 (117 aa).

The Ubiquitin-like domain maps to 10–88; the sequence is INLRLILVSG…PFGKTTVMHL (79 aa). A lipid anchor (S-palmitoyl cysteine) is attached at cysteine 113. Cysteine 114 carries the cysteine methyl ester modification. The S-geranylgeranyl cysteine moiety is linked to residue cysteine 114. Positions 115 to 117 are cleaved as a propeptide — removed in mature form; the sequence is VIL.

It localises to the cell membrane. In Bos taurus (Bovine), this protein is Ubiquitin-like protein 3 (UBL3).